The primary structure comprises 61 residues: Small ribosomal subunit protein uS14 (61 aa).

Residues C24, C27, C40, and C43 each contribute to the Zn(2+) site.

It belongs to the universal ribosomal protein uS14 family. Zinc-binding uS14 subfamily. Part of the 30S ribosomal subunit. Contacts proteins S3 and S10. Requires Zn(2+) as cofactor.

Functionally, binds 16S rRNA, required for the assembly of 30S particles and may also be responsible for determining the conformation of the 16S rRNA at the A site. This chain is Small ribosomal subunit protein uS14, found in Chloroflexus aurantiacus (strain ATCC 29364 / DSM 637 / Y-400-fl).